Reading from the N-terminus, the 131-residue chain is Large ribosomal subunit protein eL32 (131 aa).

The segment at 39-77 (LGEKWRRPKGRHSKMRRKLKSKPKMPNPGYGSPKKVRGL) is disordered. Residues 44 to 61 (RRPKGRHSKMRRKLKSKP) show a composition bias toward basic residues.

The protein belongs to the eukaryotic ribosomal protein eL32 family.

In Methanopyrus kandleri (strain AV19 / DSM 6324 / JCM 9639 / NBRC 100938), this protein is Large ribosomal subunit protein eL32 (rpl32).